Reading from the N-terminus, the 464-residue chain is ATP synthase subunit beta 2 (464 aa).

147 to 154 serves as a coordination point for ATP; that stretch reads GGAGVGKT.

The protein belongs to the ATPase alpha/beta chains family. As to quaternary structure, F-type ATPases have 2 components, CF(1) - the catalytic core - and CF(0) - the membrane proton channel. CF(1) has five subunits: alpha(3), beta(3), gamma(1), delta(1), epsilon(1). CF(0) has four main subunits: a(1), b(1), b'(1) and c(9-12).

It localises to the cell inner membrane. It carries out the reaction ATP + H2O + 4 H(+)(in) = ADP + phosphate + 5 H(+)(out). In terms of biological role, produces ATP from ADP in the presence of a proton gradient across the membrane. The catalytic sites are hosted primarily by the beta subunits. The sequence is that of ATP synthase subunit beta 2 from Cereibacter sphaeroides (strain ATCC 17023 / DSM 158 / JCM 6121 / CCUG 31486 / LMG 2827 / NBRC 12203 / NCIMB 8253 / ATH 2.4.1.) (Rhodobacter sphaeroides).